Reading from the N-terminus, the 490-residue chain is Betaine aldehyde dehydrogenase (490 aa).

Ser-26, Ile-27, and Asp-93 together coordinate K(+). An NAD(+)-binding site is contributed by 150 to 152 (GAW). The active-site Charge relay system is Lys-162. NAD(+)-binding positions include 176–179 (KPSE) and 230–233 (GVET). Leu-246 is a K(+) binding site. The active-site Proton acceptor is the Glu-252. 3 residues coordinate NAD(+): Gly-254, Cys-286, and Glu-387. The active-site Nucleophile is Cys-286. Position 286 is a cysteine sulfenic acid (-SOH) (Cys-286). 2 residues coordinate K(+): Lys-457 and Gly-460. Glu-464 serves as the catalytic Charge relay system.

Belongs to the aldehyde dehydrogenase family. In terms of assembly, dimer of dimers. K(+) is required as a cofactor.

The catalysed reaction is betaine aldehyde + NAD(+) + H2O = glycine betaine + NADH + 2 H(+). It functions in the pathway amine and polyamine biosynthesis; betaine biosynthesis via choline pathway; betaine from betaine aldehyde: step 1/1. Involved in the biosynthesis of the osmoprotectant glycine betaine. Catalyzes the irreversible oxidation of betaine aldehyde to the corresponding acid. The sequence is that of Betaine aldehyde dehydrogenase from Acinetobacter baumannii (strain SDF).